Reading from the N-terminus, the 674-residue chain is Sodium/hydrogen exchanger 1 (674 aa).

A signal peptide spans 1-24 (MKLNKSYILIVVLLLSLFYSSVSS). The segment at 31-65 (KSNNHYNSDNSNNDNKNININNNNDGDGDDDDDNN) is disordered. Residues 37–55 (NSDNSNNDNKNININNNND) are compositionally biased toward low complexity. Helical transmembrane passes span 120–140 (TIIF…YFII), 144–164 (IPFV…GIVF), 175–195 (VVSF…IFET), 213–233 (MFAV…IYIV), 275–297 (LYIL…YSVV), 314–334 (VVAI…SLIL), 336–356 (WINI…FSYM), 359–379 (VLAG…GITL), 401–421 (TAAF…LTAH), 432–452 (WSIL…CFLL), 460–480 (IPWV…FAFS), and 499–519 (NTLL…YPLL). The disordered stretch occupies residues 591–674 (HELDSNPLRF…NKNNDTLPLI (84 aa)). Residues 601 to 618 (DDDEEDDDDEDLDFDSDL) are compositionally biased toward acidic residues. The segment covering 627–657 (DSIHQSDNNNNDNGNNNNNNNNIIINNNSQH) has biased composition (low complexity). Positions 662–674 (GSNNKNNDTLPLI) are enriched in polar residues.

This sequence belongs to the monovalent cation:proton antiporter 1 (CPA1) transporter (TC 2.A.36) family.

It localises to the membrane. LY294002, an inhibitor of the catalytic subunit of PI3-kinase, blocks NHE1-dependent (but not NHE1-independent) increase in intracellular pH in response to cAMP. Regulation of intracellular pH homeostasis in response to cAMP, which is essential for chemotaxis. Necessary for F-actin localization and the kinetics of actin polymerization during chemotaxis and cell polarity but not for directional sensing. In Dictyostelium discoideum (Social amoeba), this protein is Sodium/hydrogen exchanger 1 (nhe1).